The chain runs to 500 residues: Lycopene beta cyclase, chloroplastic (500 aa).

The N-terminal 81 residues, 1-81, are a transit peptide targeting the chloroplast; the sequence is MDTLLKTPNN…ELPMYDPSKG (81 aa). 86–114 is an NAD(+) binding site; that stretch reads LAVVGGGPAGLAVAQQVSEAGLSVCSIDP.

This sequence belongs to the lycopene cyclase family.

The protein resides in the plastid. It localises to the chloroplast. The enzyme catalyses a carotenoid psi-end group = a carotenoid beta-end derivative. The protein operates within carotenoid biosynthesis; beta-carotene biosynthesis. It functions in the pathway carotenoid biosynthesis; beta-zeacarotene biosynthesis. Catalyzes the double cyclization reaction which converts lycopene to beta-carotene and neurosporene to beta-zeacarotene. The sequence is that of Lycopene beta cyclase, chloroplastic (LCY1) from Solanum lycopersicum (Tomato).